The following is a 610-amino-acid chain: Zinc metalloproteinase-disintegrin-like 4a (610 aa).

The signal sequence occupies residues 1–20 (MIQVLLVTISLAVFPYQGSS). Positions 21–189 (VILESGNVND…KKASQSNLTP (169 aa)) are excised as a propeptide. The region spanning 199–395 (KYVKLFLVAD…NMPQCILKKP (197 aa)) is the Peptidase M12B domain. A glycan (N-linked (GlcNAc...) asparagine) is linked at asparagine 218. A Ca(2+)-binding site is contributed by aspartate 286. Cystine bridges form between cysteine 310-cysteine 390, cysteine 350-cysteine 374, and cysteine 352-cysteine 357. Position 335 (histidine 335) interacts with Zn(2+). The active site involves glutamate 336. Residues histidine 339 and histidine 345 each coordinate Zn(2+). The Ca(2+) site is built by cysteine 390, valine 405, asparagine 408, phenylalanine 410, glutamate 412, glutamate 415, and aspartate 418. A Disintegrin domain is found at 403–488 (PAVCGNYFVE…AECTDSFQRN (86 aa)). 14 cysteine pairs are disulfide-bonded: cysteine 406/cysteine 435, cysteine 417/cysteine 430, cysteine 419/cysteine 425, cysteine 429/cysteine 452, cysteine 443/cysteine 449, cysteine 448/cysteine 474, cysteine 461/cysteine 481, cysteine 468/cysteine 499, cysteine 492/cysteine 504, cysteine 511/cysteine 561, cysteine 526/cysteine 572, cysteine 539/cysteine 549, cysteine 556/cysteine 598, and cysteine 592/cysteine 603. The D/ECD-tripeptide motif lies at 467 to 469 (ECD).

It belongs to the venom metalloproteinase (M12B) family. P-III subfamily. Zn(2+) serves as cofactor. Expressed by the venom gland.

The protein resides in the secreted. Functionally, snake venom metalloproteinase that impairs hemostasis in the envenomed animal. The polypeptide is Zinc metalloproteinase-disintegrin-like 4a (Crotalus adamanteus (Eastern diamondback rattlesnake)).